The sequence spans 311 residues: p-hydroxybenzoic acid efflux pump subunit AaeA (311 aa).

The chain crosses the membrane as a helical span at residues 11-31 (VGITVLVVVLAVIAIFNVWAF).

It belongs to the membrane fusion protein (MFP) (TC 8.A.1) family.

Its subcellular location is the cell inner membrane. In terms of biological role, forms an efflux pump with AaeB. In Yersinia pestis bv. Antiqua (strain Antiqua), this protein is p-hydroxybenzoic acid efflux pump subunit AaeA.